A 507-amino-acid polypeptide reads, in one-letter code: ATP synthase subunit alpha, chloroplastic (507 aa).

Residue 170 to 177 participates in ATP binding; sequence GDRQTGKT.

This sequence belongs to the ATPase alpha/beta chains family. F-type ATPases have 2 components, CF(1) - the catalytic core - and CF(0) - the membrane proton channel. CF(1) has five subunits: alpha(3), beta(3), gamma(1), delta(1), epsilon(1). CF(0) has four main subunits: a, b, b' and c.

It localises to the plastid. It is found in the chloroplast thylakoid membrane. It catalyses the reaction ATP + H2O + 4 H(+)(in) = ADP + phosphate + 5 H(+)(out). Produces ATP from ADP in the presence of a proton gradient across the membrane. The alpha chain is a regulatory subunit. The sequence is that of ATP synthase subunit alpha, chloroplastic from Nicotiana sylvestris (Wood tobacco).